An 824-amino-acid chain; its full sequence is MENVHLAPETDEDDLYSGFNDYNPAYDTEELENDTGFQQAVRTSHGRRPPVTAKIPSTAVSRPIATGYGSKTSLTSSMGRPMTGTIQDGVARPMTAVRAAGFSKAALRGSAFDPLGQSRGPAPPLEAKNEDSPEEKIRQLEKKVNELVEESCIANSCGDLKLALEKAKDAGRKERVLVRQREQVTSPENINLDLTYSVLFNLASQYSANEMYAEALNTYQVIVKNKMFSNAGRLKVNMGNIYLKQRNYSKAIKFYRMALDQIPSVHKEMRIKIMQNIGITFIKTGQYSDAINSFEHIMSMAPSLKAGFNLILSCFAIGDREKMKKAFQKLIAVPLEIDEDDKYISPSDDPHTNLLIEAIKNDHLRQMERERKAMAEKYIMTAAKLIAPVIEASFAVGYNWCVEVVKASQYVELANDLEINKAITYLRQKDFNQAVDTLKMFEKKDSRVKSAAATNLSFLYYLENEFAQASSYADLAVNSDRYNPSALTNKGNTVFANGDYEKAAEFYKEALRNDSSCTEALYNIGLTYKKLNRLDEALDSFLKLHAILRNSAQVLCQIANIYELMEDPNQAIEWLMQLISVVPTDSQALSKLGELYDSEGDKSQAFQYYYESYRYFPSNIEVIEWLGAYYIDTQFCEKAIQYFERASLIQPTQVKWQLMVASCFRRSGNYQKALDTYKEIHRKFPENVECLRFLVRLCTDIGLKEVQEYATKLKRLEKMKEMREQRIKSGRDSSGGSRSKREGSAGSDSGQNNSASSKSERLSAKLRALPGTDEPYESSGNKEIDASYVDPLGPQIERPKTAAKKRIDEDDFADEELGDDLLPE.

Disordered regions lie at residues 1–27 (MENV…PAYD) and 111–134 (AFDP…DSPE). TPR repeat units lie at residues 196 to 229 (YSVL…KMFS), 232 to 265 (GRLK…IPSV), 271 to 304 (IKIM…APSL), 415 to 448 (NDLE…DSRV), 450 to 483 (SAAA…DRYN), 484 to 517 (PSAL…DSSC), 518 to 551 (TEAL…LRNS), 552 to 585 (AQVL…VPTD), 586 to 619 (SQAL…FPSN), 620 to 653 (IEVI…QPTQ), and 654 to 687 (VKWQ…FPEN). The segment covering 721–731 (EMREQRIKSGR) has biased composition (basic and acidic residues). The disordered stretch occupies residues 721 to 824 (EMREQRIKSG…EELGDDLLPE (104 aa)). Over residues 748-757 (DSGQNNSASS) the composition is skewed to polar residues. Positions 797-808 (ERPKTAAKKRID) are enriched in basic and acidic residues. The span at 809-824 (EDDFADEELGDDLLPE) shows a compositional bias: acidic residues.

Component of the IFT complex B, at least composed of IFT20, IFT22, IFT25, IFT27, IFT46, IFT52, TRAF3IP1/IFT54, IFT57, IFT74, IFT80, IFT81, and IFT88. Interacts with IFT20, IFT22, IFT25, IFT27, IFT52, TRAF3IP1, IFT74, IFT80 and IFT81. Interacts with IFT172. Interacts with IFT57. Interacts with IFT46. Interacts with IFT70B. Interacts with C2CD3. Interacts with ENTR1 (via N-terminus). Interacts with LRRC56. Interacts with DZIP1. Interacts with CCDC38. Interacts with CCDC146. Interacts with CFAP53. In terms of tissue distribution, testis.

It localises to the cytoplasm. Its subcellular location is the cytoskeleton. The protein resides in the microtubule organizing center. The protein localises to the centrosome. It is found in the centriole. It localises to the cilium basal body. Its subcellular location is the cell projection. The protein resides in the cilium. The protein localises to the flagellum. In terms of biological role, positively regulates primary cilium biogenesis. Also involved in autophagy since it is required for trafficking of ATG16L and the expansion of the autophagic compartment. The chain is Intraflagellar transport protein 88 homolog (Ift88) from Mus musculus (Mouse).